A 483-amino-acid polypeptide reads, in one-letter code: tRNA sulfurtransferase (483 aa).

In terms of domain architecture, THUMP spans 63–167; that stretch reads GQLIDMLART…DDQVYLVTKK (105 aa). ATP-binding positions include 185-186, Lys267, Gly289, and Gln298; that span reads LI. Residues Cys346 and Cys457 are joined by a disulfide bond. Residues 405 to 483 form the Rhodanese domain; the sequence is LPVSAKVIDI…GYTNVGVYRP (79 aa). Cys457 functions as the Cysteine persulfide intermediate in the catalytic mechanism.

The protein belongs to the ThiI family.

Its subcellular location is the cytoplasm. It catalyses the reaction [ThiI sulfur-carrier protein]-S-sulfanyl-L-cysteine + a uridine in tRNA + 2 reduced [2Fe-2S]-[ferredoxin] + ATP + H(+) = [ThiI sulfur-carrier protein]-L-cysteine + a 4-thiouridine in tRNA + 2 oxidized [2Fe-2S]-[ferredoxin] + AMP + diphosphate. It carries out the reaction [ThiS sulfur-carrier protein]-C-terminal Gly-Gly-AMP + S-sulfanyl-L-cysteinyl-[cysteine desulfurase] + AH2 = [ThiS sulfur-carrier protein]-C-terminal-Gly-aminoethanethioate + L-cysteinyl-[cysteine desulfurase] + A + AMP + 2 H(+). Its pathway is cofactor biosynthesis; thiamine diphosphate biosynthesis. Catalyzes the ATP-dependent transfer of a sulfur to tRNA to produce 4-thiouridine in position 8 of tRNAs, which functions as a near-UV photosensor. Also catalyzes the transfer of sulfur to the sulfur carrier protein ThiS, forming ThiS-thiocarboxylate. This is a step in the synthesis of thiazole, in the thiamine biosynthesis pathway. The sulfur is donated as persulfide by IscS. The protein is tRNA sulfurtransferase of Saccharophagus degradans (strain 2-40 / ATCC 43961 / DSM 17024).